Consider the following 449-residue polypeptide: Required for meiotic nuclear division protein 1 homolog (449 aa).

The N-terminal 16 residues, M1–L16, are a transit peptide targeting the mitochondrion.

It belongs to the RMD1/sif2 family. As to quaternary structure, homooligomer.

It localises to the mitochondrion. Its function is as follows. Required for mitochondrial translation, possibly by coordinating the assembly or maintenance of the mitochondrial ribosome. The sequence is that of Required for meiotic nuclear division protein 1 homolog (RMND1) from Pongo abelii (Sumatran orangutan).